The following is a 528-amino-acid chain: MCSLAAGNGRGAELGPEPLELSDSGDDAGWEDEDADTEPAHGRQHTPCLFCDRLFASAEETFSHCKLEHQFNIDSMVHKHGLEFYGYIKLINFIRLKNPTVEYMNSIYNPVPWEKDEYLKPVLEDDLLLQFDVEDLYEPVSTPFSYPNGLSESASVVEKLKHMEARALSAEAALARAREDLQKMKQFAQDFVMNVDVRTCSSTTTIADLQEDEDGVYFSSYGHYGIHEEMLKDKVRTESYRDFIYQNPHIFKDKVVLDVGCGTGILSMFAAKVGAKKVIAVDQSEILYQAMDIIRLNKLEDTIVLIKGKIEEVSLPVEKVDVIISEWMGYFLLFESMLDSVLYAKSKYLAKGGSVYPDICTISLVAVSDVSKHADRIAFWDDVYGFNMSCMKKAVIPEAVVEVVDHKTLISDPCDIKHIDCHTTSISDLEFSSDFTLRTTKTAMCTAVAGYFDIYFEKNCHNRVVFSTGPQSTKTHWKQTVFLLEKPFPVKAGEALKGKITVHKNKKDPRSLIVTLTLNSSTQTYSLQ.

Residues 1–43 form a disordered region; that stretch reads MCSLAAGNGRGAELGPEPLELSDSGDDAGWEDEDADTEPAHGR. Cysteine 2 is modified (N-acetylcysteine). Residues serine 22 and serine 24 each carry the phosphoserine modification. Acidic residues predominate over residues 23 to 37; the sequence is DSGDDAGWEDEDADT. The C2H2-type zinc finger occupies 46-69; the sequence is TPCLFCDRLFASAEETFSHCKLEH. Position 169 is a phosphoserine (serine 169). The tract at residues 184 to 528 is mediates interaction with ALDH1A1; that stretch reads MKQFAQDFVM…NSSTQTYSLQ (345 aa). The 315-residue stretch at 214-528 folds into the SAM-dependent MTase PRMT-type domain; that stretch reads DGVYFSSYGH…NSSTQTYSLQ (315 aa). S-adenosyl-L-homocysteine contacts are provided by arginine 236, glycine 260, aspartate 282, serine 284, isoleucine 310, and glutamate 311. Residues glutamate 326 and glutamate 335 contribute to the active site.

It belongs to the class I-like SAM-binding methyltransferase superfamily. Protein arginine N-methyltransferase family. As to quaternary structure, monomer and homodimer. Interacts with EPB41L3 (via FERM domain); the interaction is direct and inhibits the protein-arginine N-methyltransferase activity of PRMT3. Interacts with the 40S ribosomal protein RPS2. Interacts with ALDH1A1; the interaction is direct, inhibits ALDH1A1 aldehyde dehydrogenase activity and is independent of the methyltransferase activity of PRMT3.

The protein localises to the cytoplasm. The protein resides in the cytosol. Its subcellular location is the nucleus. It carries out the reaction L-arginyl-[protein] + S-adenosyl-L-methionine = N(omega)-methyl-L-arginyl-[protein] + S-adenosyl-L-homocysteine + H(+). It catalyses the reaction L-arginyl-[protein] + 2 S-adenosyl-L-methionine = N(omega),N(omega)-dimethyl-L-arginyl-[protein] + 2 S-adenosyl-L-homocysteine + 2 H(+). With respect to regulation, inhibited by N-ethylmaleimide and high concentrations of zinc chloride. Protein-arginine N-methyltransferase that catalyzes both the monomethylation and asymmetric dimethylation of the guanidino nitrogens of arginine residues in target proteins, and therefore falls into the group of type I methyltransferases. Catalyzes the asymmetric arginine dimethylation at multiple sites in the Arg/Gly-rich region of small ribosomal subunit protein uS5/RPS2. Also appears to methylate other ribosomal proteins. May regulate retinoic acid synthesis and signaling by inhibiting ALDH1A1 retinal dehydrogenase activity. Contributes to methylation of histone H4 'Arg-3', a specific tag for epigenetic transcriptional activation. Promotes osteogenesis. This chain is Protein arginine N-methyltransferase 3, found in Mus musculus (Mouse).